The following is a 486-amino-acid chain: Protein nucleotidyltransferase YdiU (486 aa).

Residues Gly-90, Gly-92, Arg-93, Lys-113, Asp-125, Gly-126, Arg-176, and Arg-183 each coordinate ATP. Catalysis depends on Asp-252, which acts as the Proton acceptor. Residues Asn-253 and Asp-262 each coordinate Mg(2+). Asp-262 contacts ATP.

Belongs to the SELO family. The cofactor is Mg(2+). Mn(2+) is required as a cofactor.

The catalysed reaction is L-seryl-[protein] + ATP = 3-O-(5'-adenylyl)-L-seryl-[protein] + diphosphate. The enzyme catalyses L-threonyl-[protein] + ATP = 3-O-(5'-adenylyl)-L-threonyl-[protein] + diphosphate. It catalyses the reaction L-tyrosyl-[protein] + ATP = O-(5'-adenylyl)-L-tyrosyl-[protein] + diphosphate. It carries out the reaction L-histidyl-[protein] + UTP = N(tele)-(5'-uridylyl)-L-histidyl-[protein] + diphosphate. The catalysed reaction is L-seryl-[protein] + UTP = O-(5'-uridylyl)-L-seryl-[protein] + diphosphate. The enzyme catalyses L-tyrosyl-[protein] + UTP = O-(5'-uridylyl)-L-tyrosyl-[protein] + diphosphate. Functionally, nucleotidyltransferase involved in the post-translational modification of proteins. It can catalyze the addition of adenosine monophosphate (AMP) or uridine monophosphate (UMP) to a protein, resulting in modifications known as AMPylation and UMPylation. The protein is Protein nucleotidyltransferase YdiU of Pseudomonas putida (strain ATCC 47054 / DSM 6125 / CFBP 8728 / NCIMB 11950 / KT2440).